We begin with the raw amino-acid sequence, 94 residues long: MDAVIDTSVIIEIFRGNKDTLYQICDYNCKITSITVFELYCGNLKENEMIMIDSLPKLNFDDKSSKIAGNIFKKLKKEGKIPSVKDLLIASIFY.

Asp6 is a binding site for Mg(2+).

The protein belongs to the PINc/VapC protein family. Requires Mg(2+) as cofactor.

Its function is as follows. Toxic component of a type II toxin-antitoxin (TA) system. An RNase. Its cognate antitoxin is VapB3. In Methanocaldococcus jannaschii (strain ATCC 43067 / DSM 2661 / JAL-1 / JCM 10045 / NBRC 100440) (Methanococcus jannaschii), this protein is Ribonuclease VapC3 (vapC3).